The sequence spans 109 residues: Thioredoxin (109 aa).

Residues 2 to 109 enclose the Thioredoxin domain; sequence TNCIVELTDG…LKDFLNLYLK (108 aa). A disulfide bridge links cysteine 33 with cysteine 36.

It belongs to the thioredoxin family.

In terms of biological role, participates in various redox reactions through the reversible oxidation of its active center dithiol to a disulfide and catalyzes dithiol-disulfide exchange reactions. The sequence is that of Thioredoxin (trxA) from Buchnera aphidicola subsp. Baizongia pistaciae (strain Bp).